Consider the following 308-residue polypeptide: D-alanine--D-alanine ligase (308 aa).

One can recognise an ATP-grasp domain in the interval 104–304 (KQALVPHGIP…YAELVERIVE (201 aa)). 131–187 (LPRPYVLKPVNEGSSVGVAIVRDDSNYGNPISRDALGPWQQFDRLLAEPFIKGRELT) contributes to the ATP binding site. 3 residues coordinate Mg(2+): Asp-255, Glu-271, and Asn-273.

Belongs to the D-alanine--D-alanine ligase family. The cofactor is Mg(2+). It depends on Mn(2+) as a cofactor.

It is found in the cytoplasm. The enzyme catalyses 2 D-alanine + ATP = D-alanyl-D-alanine + ADP + phosphate + H(+). The protein operates within cell wall biogenesis; peptidoglycan biosynthesis. Cell wall formation. The chain is D-alanine--D-alanine ligase from Sphingopyxis alaskensis (strain DSM 13593 / LMG 18877 / RB2256) (Sphingomonas alaskensis).